The chain runs to 173 residues: ATP synthase subunit b (173 aa).

A helical membrane pass occupies residues 12 to 32; that stretch reads LDVNPGLVVWTLITFLVVVLV.

The protein belongs to the ATPase B chain family. In terms of assembly, F-type ATPases have 2 components, F(1) - the catalytic core - and F(0) - the membrane proton channel. F(1) has five subunits: alpha(3), beta(3), gamma(1), delta(1), epsilon(1). F(0) has three main subunits: a(1), b(2) and c(10-14). The alpha and beta chains form an alternating ring which encloses part of the gamma chain. F(1) is attached to F(0) by a central stalk formed by the gamma and epsilon chains, while a peripheral stalk is formed by the delta and b chains.

It is found in the cell inner membrane. Its function is as follows. F(1)F(0) ATP synthase produces ATP from ADP in the presence of a proton or sodium gradient. F-type ATPases consist of two structural domains, F(1) containing the extramembraneous catalytic core and F(0) containing the membrane proton channel, linked together by a central stalk and a peripheral stalk. During catalysis, ATP synthesis in the catalytic domain of F(1) is coupled via a rotary mechanism of the central stalk subunits to proton translocation. Component of the F(0) channel, it forms part of the peripheral stalk, linking F(1) to F(0). In Leptospira borgpetersenii serovar Hardjo-bovis (strain JB197), this protein is ATP synthase subunit b.